A 110-amino-acid chain; its full sequence is MSKEKGDIAEKKAISFLEKSNFEIVEKNFYAKKLGEIDIIAQRNKIYHFIEVKSANDYETAINNITSQKLSKIKRSVDFYIQKNNLNISYSIDVIIVVDDKIELLENITM.

This sequence belongs to the UPF0102 family.

The protein is UPF0102 protein Abu_0255 of Aliarcobacter butzleri (strain RM4018) (Arcobacter butzleri).